The following is an 809-amino-acid chain: Ferric-pyoverdine BN7/BN8 receptor (809 aa).

Positions 1–45 (MNHTARKRQGWQRSVSQKLAGAVVQGIACMGASAPLLLMPAWATA) are cleaved as a signal peptide. Residues 166–273 (TPRETPQSLT…PSATINLIRK (108 aa)) enclose the TBDR plug domain. A TBDR beta-barrel domain is found at 278-809 (EAQASITGEA…NVMTSFKYSF (532 aa)). The short motif at 792-809 (YGVYGTPRNVMTSFKYSF) is the TonB C-terminal box element.

Belongs to the TonB-dependent receptor family.

Its subcellular location is the cell outer membrane. Its function is as follows. Specific receptor for the siderophores ferric pyoverdines (pseudobactins) BN8 and BN7, iron chelating molecules that allow the organism to extract iron from the environment, especially under iron-restricted conditions. The chain is Ferric-pyoverdine BN7/BN8 receptor (pupB) from Pseudomonas putida (Arthrobacter siderocapsulatus).